Consider the following 205-residue polypeptide: Peptidyl-prolyl cis-trans isomerase B (205 aa).

An N-terminal signal peptide occupies residues 1–20; the sequence is MKFSGLWCWLLLFLSVNVIA. A PPIase cyclophilin-type domain is found at 39-198; it reads FFDIEHGEEK…EAVKIAKCGE (160 aa).

The protein belongs to the cyclophilin-type PPIase family. PPIase B subfamily.

The protein resides in the secreted. The enzyme catalyses [protein]-peptidylproline (omega=180) = [protein]-peptidylproline (omega=0). Cyclosporin A (CsA) inhibits CYPB. Its function is as follows. PPIases accelerate the folding of proteins. It catalyzes the cis-trans isomerization of proline imidic peptide bonds in oligopeptides. The polypeptide is Peptidyl-prolyl cis-trans isomerase B (CPR2) (Saccharomyces cerevisiae (strain ATCC 204508 / S288c) (Baker's yeast)).